Consider the following 512-residue polypeptide: ATP synthase subunit alpha (512 aa).

169 to 176 (GDRQTGKT) contributes to the ATP binding site.

It belongs to the ATPase alpha/beta chains family. F-type ATPases have 2 components, CF(1) - the catalytic core - and CF(0) - the membrane proton channel. CF(1) has five subunits: alpha(3), beta(3), gamma(1), delta(1), epsilon(1). CF(0) has three main subunits: a(1), b(2) and c(9-12). The alpha and beta chains form an alternating ring which encloses part of the gamma chain. CF(1) is attached to CF(0) by a central stalk formed by the gamma and epsilon chains, while a peripheral stalk is formed by the delta and b chains.

The protein resides in the cell inner membrane. The catalysed reaction is ATP + H2O + 4 H(+)(in) = ADP + phosphate + 5 H(+)(out). Its function is as follows. Produces ATP from ADP in the presence of a proton gradient across the membrane. The alpha chain is a regulatory subunit. In Azoarcus sp. (strain BH72), this protein is ATP synthase subunit alpha.